Here is a 386-residue protein sequence, read N- to C-terminus: Putative gustatory receptor 22b (386 aa).

Over 1–48 (MFGSSREIRPYLARQMLKTTLYGSWLLGIFPFTLDSGKRIRQLRRSRC) the chain is Cytoplasmic. Residues 49–69 (LTLYGLVLNYFLIFTLIRLAF) form a helical membrane-spanning segment. The Extracellular segment spans residues 70–89 (EYRKHKLEAFKRNPVLEMIN). A helical membrane pass occupies residues 90-110 (VVIGIINVLSALIVHFMNFWG). Residues 111-155 (SRKVGEICNELLILEYQDFEGLNGRNCPNFNCFVIQKCLTILGQL) lie on the Cytoplasmic side of the membrane. Residues 156 to 176 (LSFFTLNFALPGLEFHICLVL) traverse the membrane as a helical segment. Residues 177 to 178 (LS) are Extracellular-facing. A helical transmembrane segment spans residues 179–199 (CLMEFSLNLNIMHYHVGVLLI). The Cytoplasmic segment spans residues 200–254 (YRYVWLINEQLKDLVSQLKLNPETDFSRIHQFLSLYKRLLELNRKLVIAYEYQMT). A helical transmembrane segment spans residues 255–275 (LFIIAQLSGNIVVIYFLIVYG). The Extracellular portion of the chain corresponds to 276-282 (LSMRTYS). Residues 283-303 (IFLVAFPNSLLINIWDFWLCI) form a helical membrane-spanning segment. Over 304–363 (AACDLTEKAGDETAIILKIFSDLEHRDDKLEMSVNEFAWLCSHRKFRFQLCGLFSMNCRM) the chain is Cytoplasmic. The chain crosses the membrane as a helical span at residues 364-384 (GFKMIITTFLYLVYLVQFDYM). At 385 to 386 (NL) the chain is on the extracellular side.

The protein belongs to the insect chemoreceptor superfamily. Gustatory receptor (GR) family. Gr22e subfamily. As to expression, expressed in taste bristles in the foreleg and labial palps. In larvae, is expressed in neurons of the dorsal and posterior pharyngeal sense organs. Expressed in taste neurons that mediate sensitivity to bitter compounds.

It is found in the cell membrane. Functionally, probable gustatory receptor which mediates acceptance or avoidance behavior, depending on its substrates. Seems to be involved in the sensing of bitter taste since it is expressed in neurons that mediate sensitivity to bitter compounds. The protein is Putative gustatory receptor 22b of Drosophila melanogaster (Fruit fly).